The following is a 34-amino-acid chain: Omega-ctenitoxin-Pn2a (34 aa).

Intrachain disulfides connect cysteine 2–cysteine 16, cysteine 9–cysteine 26, and cysteine 15–cysteine 28.

This sequence belongs to the neurotoxin 02 (plectoxin) family. 01 (Tx3) subfamily. In terms of tissue distribution, expressed by the venom gland.

Its subcellular location is the secreted. Inhibits all known high-voltage activated calcium channels (L-, P/Q- and R-type currents) (Cav), and most effectively the P/Q- (Cav2.1/CACNA1A) and R-type (Cav2.3/CACNA1E) currents. In rat brain, inhibits glutamate release, neuronal death and loss of neurotransmission in the hippocampus resulting from ischemia. In vivo, induces rapid general flaccid paralysis followed by death in 10-30 minutes at dose levels of 5 ug per mouse. The sequence is that of Omega-ctenitoxin-Pn2a from Phoneutria nigriventer (Brazilian armed spider).